A 428-amino-acid chain; its full sequence is Enolase (428 aa).

Gln163 lines the (2R)-2-phosphoglycerate pocket. The Proton donor role is filled by Glu205. Positions 243, 286, and 313 each coordinate Mg(2+). Lys338, Arg367, Ser368, and Lys389 together coordinate (2R)-2-phosphoglycerate. Lys338 functions as the Proton acceptor in the catalytic mechanism.

This sequence belongs to the enolase family. It depends on Mg(2+) as a cofactor.

Its subcellular location is the cytoplasm. The protein localises to the secreted. The protein resides in the cell surface. The enzyme catalyses (2R)-2-phosphoglycerate = phosphoenolpyruvate + H2O. It functions in the pathway carbohydrate degradation; glycolysis; pyruvate from D-glyceraldehyde 3-phosphate: step 4/5. In terms of biological role, catalyzes the reversible conversion of 2-phosphoglycerate (2-PG) into phosphoenolpyruvate (PEP). It is essential for the degradation of carbohydrates via glycolysis. In Polaromonas naphthalenivorans (strain CJ2), this protein is Enolase.